A 1350-amino-acid chain; its full sequence is Probable serine/threonine-protein kinase irlE (1350 aa).

Residue Asn-37 is glycosylated (N-linked (GlcNAc...) asparagine). Residues 149-169 traverse the membrane as a helical segment; sequence FWEILASCYGTISFIKFFNIF. Residues 731–802 adopt a coiled-coil conformation; that stretch reads EAELKEKFEI…NIQQNYENQH (72 aa). Residues 761 to 771 show a composition bias toward basic residues; the sequence is LKKKNKLKKQK. 2 disordered regions span residues 761–795 and 807–864; these read LKKKNKLKKQKNQQQQQQAKQQAQQQKQQHQQNIQ and RKFN…TTNS. Residues 772 to 795 are compositionally biased toward low complexity; that stretch reads NQQQQQQAKQQAQQQKQQHQQNIQ. The segment covering 809–823 has biased composition (polar residues); the sequence is FNQQTKGRPISPSSI. Low complexity predominate over residues 824 to 864; sequence QNQNLNPTLLQNQNQTSNPTPNLESTKKATPTTTTTTTTNS. The 264-residue stretch at 903–1166 folds into the Protein kinase domain; the sequence is KKESNILGRG…LSSVLKHPLF (264 aa). ATP contacts are provided by residues 909-917 and Lys-932; that span reads LGRGSNGTL. The active-site Proton acceptor is the Asp-1034. The KEN domain occupies 1169–1346; that stretch reads SLKKIKFLES…KNSIHFSNDT (178 aa).

It belongs to the protein kinase superfamily. Ser/Thr protein kinase family.

It is found in the membrane. The enzyme catalyses L-seryl-[protein] + ATP = O-phospho-L-seryl-[protein] + ADP + H(+). It carries out the reaction L-threonyl-[protein] + ATP = O-phospho-L-threonyl-[protein] + ADP + H(+). The chain is Probable serine/threonine-protein kinase irlE (irlE) from Dictyostelium discoideum (Social amoeba).